Reading from the N-terminus, the 231-residue chain is NADH-ubiquinone oxidoreductase chain 4 (231 aa).

Helical transmembrane passes span 1–21, 34–54, 63–85, 89–111, 128–148, and 169–189; these read PIAG…YGII, MFIP…LTCL, IAYS…TPWG, AMAL…NTTY, ILPM…AMPP, and TIIM…HMFL.

The protein belongs to the complex I subunit 4 family.

The protein resides in the mitochondrion membrane. It carries out the reaction a ubiquinone + NADH + 5 H(+)(in) = a ubiquinol + NAD(+) + 4 H(+)(out). Functionally, core subunit of the mitochondrial membrane respiratory chain NADH dehydrogenase (Complex I) that is believed to belong to the minimal assembly required for catalysis. Complex I functions in the transfer of electrons from NADH to the respiratory chain. The immediate electron acceptor for the enzyme is believed to be ubiquinone. This Lachesis muta muta (Bushmaster) protein is NADH-ubiquinone oxidoreductase chain 4 (MT-ND4).